The primary structure comprises 281 residues: Energy-coupling factor transporter ATP-binding protein EcfA1 (281 aa).

In terms of domain architecture, ABC transporter spans 7-242 (IAAEDITFRY…NQDLIKIGLD (236 aa)). 42 to 49 (GHNGSGKS) is an ATP binding site.

This sequence belongs to the ABC transporter superfamily. Energy-coupling factor EcfA family. In terms of assembly, forms a stable energy-coupling factor (ECF) transporter complex composed of 2 membrane-embedded substrate-binding proteins (S component), 2 ATP-binding proteins (A component) and 2 transmembrane proteins (T component).

The protein localises to the cell membrane. ATP-binding (A) component of a common energy-coupling factor (ECF) ABC-transporter complex. Unlike classic ABC transporters this ECF transporter provides the energy necessary to transport a number of different substrates. This is Energy-coupling factor transporter ATP-binding protein EcfA1 from Bacillus licheniformis (strain ATCC 14580 / DSM 13 / JCM 2505 / CCUG 7422 / NBRC 12200 / NCIMB 9375 / NCTC 10341 / NRRL NRS-1264 / Gibson 46).